The chain runs to 370 residues: MPTETLQTGSMVKPVSPAGTFTSAVPLRILNKGPDYFRRQAEPNPKRLSAVERLEADKAKYVKSQEVINAKQEPVKPAVLAKPPVCPAAKRALGSPTLKVFGNHAKTESGVQRENLKLEILKNIINSSEGSSSGSGHKHSSRNWPPHRSEATDLHRHSFAESLKVYPTQGRRSPQEGGSHVGRRLLEQSAESFLHVSHSSSDIRKVTSVKPLKAIPCSSSAPPLPPKPKIAAIASMKSPEADPVEPACGVSRRPSLQRSKSDLSDRYFRVDADVERFFNYCGLDPEELENLGMENFARANSDIISLNFRSASMISSDCEQSQDSNSDLRNDDSANDRVPYGISAIERNARIIKWLYSIKQARESQKVSHV.

Disordered stretches follow at residues 127–151 and 237–256; these read SSEG…RSEA and KSPE…RPSL. Serine 238 and serine 301 each carry phosphoserine. Residues 317–337 are disordered; the sequence is DCEQSQDSNSDLRNDDSANDR. Over residues 326–335 the composition is skewed to basic and acidic residues; it reads SDLRNDDSAN.

This sequence belongs to the FAM110 family. As to expression, detected in thyroid, spleen and testis, and at lower levels in stomach, spinal cord, lymph node, trachea, adrenal gland, prostate, ovary and intestine.

The protein localises to the cytoplasm. It is found in the cytoskeleton. The protein resides in the microtubule organizing center. Its subcellular location is the centrosome. In terms of biological role, may be involved in tumor progression. The chain is Protein FAM110B (FAM110B) from Homo sapiens (Human).